We begin with the raw amino-acid sequence, 225 residues long: Thymidylate kinase (225 aa).

An ATP-binding site is contributed by 10-17 (GPEGAGKT).

Belongs to the thymidylate kinase family.

It catalyses the reaction dTMP + ATP = dTDP + ADP. In terms of biological role, phosphorylation of dTMP to form dTDP in both de novo and salvage pathways of dTTP synthesis. The sequence is that of Thymidylate kinase from Geobacillus thermodenitrificans (strain NG80-2).